The sequence spans 1862 residues: Chitin synthase V (1862 aa).

Residues 1–26 (MAMSLPQLGGAGGPHTQPSLPSLPAH) are disordered. In terms of domain architecture, Myosin motor spans 1 to 778 (MAMSLPQLGG…CWMEIAQLGE (778 aa)). A glycan (N-linked (GlcNAc...) asparagine) is linked at Asn-63. 104–111 (GESGAGKS) serves as a coordination point for ATP. Residues Asn-123, Asn-429, Asn-483, Asn-522, and Asn-560 are each glycosylated (N-linked (GlcNAc...) asparagine). Residues 592–643 (TVSSKPMRAPSVMSRKTHRTGRPSTAYKRQQQEAMEELDQQSQAGESKKNAK) form a disordered region. An actin-binding region spans residues 658 to 682 (LDNVQKAVTDPGTNSYFVFCLKPND). Transmembrane regions (helical) follow at residues 884 to 904 (WVAL…RLIG) and 923 to 943 (MLIW…PMLI). A Cytochrome b5 heme-binding domain is found at 947-1009 (QYVYSSNELS…YAGKDISALF (63 aa)). Residues Asn-1036, Asn-1063, and Asn-1192 are each glycosylated (N-linked (GlcNAc...) asparagine). The helical transmembrane segment at 1202–1222 (FILAISVMLASILVFKFLAAL) threads the bilayer. Residues Asn-1459 and Asn-1565 are each glycosylated (N-linked (GlcNAc...) asparagine). A run of 3 helical transmembrane segments spans residues 1590–1610 (FVVF…MYIV), 1623–1643 (VPIT…VIFI), and 1650–1670 (MVGW…GLPL). A glycan (N-linked (GlcNAc...) asparagine) is linked at Asn-1771. The region spanning 1804–1859 (MPSDDALLAEIRDILKTADLMTVTKKGIKQELERRFNVPLDAKRAYINSATEALLS) is the DEK-C domain.

It in the N-terminal section; belongs to the TRAFAC class myosin-kinesin ATPase superfamily. Myosin family. The protein in the C-terminal section; belongs to the chitin synthase family. Class V subfamily.

The protein localises to the cell membrane. The catalysed reaction is [(1-&gt;4)-N-acetyl-beta-D-glucosaminyl](n) + UDP-N-acetyl-alpha-D-glucosamine = [(1-&gt;4)-N-acetyl-beta-D-glucosaminyl](n+1) + UDP + H(+). In terms of biological role, polymerizes chitin, a structural polymer of the cell wall and septum, by transferring the sugar moiety of UDP-GlcNAc to the non-reducing end of the growing chitin polymer. ChsV and chsVb do perform additive, but not redundant, functions in septum formation. Involved in cell wall integrity and resistance to antimicrobial plant defense compounds such as the tomato phytoanticipin alpha-tomatine or H(2)O(2), and plays a crucial role in vascular colonization and pathogenicity. Also plays an important role in nuclear sorting or distribution. This Fusarium oxysporum f. sp. lycopersici (strain 4287 / CBS 123668 / FGSC 9935 / NRRL 34936) (Fusarium vascular wilt of tomato) protein is Chitin synthase V.